The primary structure comprises 238 residues: Pyridoxine 5'-phosphate synthase (238 aa).

Asn-6 is a 3-amino-2-oxopropyl phosphate binding site. 8–9 lines the 1-deoxy-D-xylulose 5-phosphate pocket; the sequence is DH. Position 17 (Arg-17) interacts with 3-amino-2-oxopropyl phosphate. Residue His-42 is the Proton acceptor of the active site. 2 residues coordinate 1-deoxy-D-xylulose 5-phosphate: Arg-44 and His-49. The active-site Proton acceptor is Glu-69. Thr-99 contacts 1-deoxy-D-xylulose 5-phosphate. His-186 functions as the Proton donor in the catalytic mechanism. 3-amino-2-oxopropyl phosphate is bound by residues Gly-187 and 208-209; that span reads GH.

It belongs to the PNP synthase family. Homooctamer; tetramer of dimers.

The protein resides in the cytoplasm. It catalyses the reaction 3-amino-2-oxopropyl phosphate + 1-deoxy-D-xylulose 5-phosphate = pyridoxine 5'-phosphate + phosphate + 2 H2O + H(+). It participates in cofactor biosynthesis; pyridoxine 5'-phosphate biosynthesis; pyridoxine 5'-phosphate from D-erythrose 4-phosphate: step 5/5. Functionally, catalyzes the complicated ring closure reaction between the two acyclic compounds 1-deoxy-D-xylulose-5-phosphate (DXP) and 3-amino-2-oxopropyl phosphate (1-amino-acetone-3-phosphate or AAP) to form pyridoxine 5'-phosphate (PNP) and inorganic phosphate. The chain is Pyridoxine 5'-phosphate synthase from Anaplasma marginale (strain St. Maries).